Reading from the N-terminus, the 387-residue chain is Phosphoglycerate kinase (387 aa).

Substrate is bound by residues 21–23 (DLN), Arg36, 59–62 (HLGR), Arg113, and Arg146. ATP contacts are provided by residues Lys197, Glu314, and 340–343 (GGDT).

This sequence belongs to the phosphoglycerate kinase family. As to quaternary structure, monomer.

It is found in the cytoplasm. It catalyses the reaction (2R)-3-phosphoglycerate + ATP = (2R)-3-phospho-glyceroyl phosphate + ADP. It functions in the pathway carbohydrate degradation; glycolysis; pyruvate from D-glyceraldehyde 3-phosphate: step 2/5. This Marinomonas sp. (strain MWYL1) protein is Phosphoglycerate kinase.